Reading from the N-terminus, the 279-residue chain is Energy-coupling factor transporter ATP-binding protein EcfA1 (279 aa).

One can recognise an ABC transporter domain in the interval 5–240 (ITVNNLFFKY…GNRLISLGLD (236 aa)). An ATP-binding site is contributed by 40 to 47 (GHNGSGKS).

It belongs to the ABC transporter superfamily. Energy-coupling factor EcfA family. Forms a stable energy-coupling factor (ECF) transporter complex composed of 2 membrane-embedded substrate-binding proteins (S component), 2 ATP-binding proteins (A component) and 2 transmembrane proteins (T component).

Its subcellular location is the cell membrane. Functionally, ATP-binding (A) component of a common energy-coupling factor (ECF) ABC-transporter complex. Unlike classic ABC transporters this ECF transporter provides the energy necessary to transport a number of different substrates. The protein is Energy-coupling factor transporter ATP-binding protein EcfA1 of Streptococcus agalactiae serotype Ia (strain ATCC 27591 / A909 / CDC SS700).